Here is a 242-residue protein sequence, read N- to C-terminus: Large ribosomal subunit protein uL1 (242 aa).

The protein belongs to the universal ribosomal protein uL1 family. In terms of assembly, part of the 50S ribosomal subunit.

In terms of biological role, binds directly to 23S rRNA. The L1 stalk is quite mobile in the ribosome, and is involved in E site tRNA release. Functionally, protein L1 is also a translational repressor protein, it controls the translation of the L11 operon by binding to its mRNA. This chain is Large ribosomal subunit protein uL1, found in Kitasatospora aureofaciens (Streptomyces aureofaciens).